Here is a 395-residue protein sequence, read N- to C-terminus: Acid ceramidase (395 aa).

The N-terminal stretch at 1–21 (MLGRSRLALVLLAAAVSCAVA) is a signal peptide. A disulfide bond links Cys31 and Cys340. Cys143 acts as the Nucleophile in catalysis. N-linked (GlcNAc...) asparagine glycosylation is found at Asn173, Asn195, Asn259, Asn286, Asn342, and Asn348. An intrachain disulfide couples Cys388 to Cys392.

Belongs to the acid ceramidase family. In terms of assembly, heterodimer; disulfide-linked. The heterodimer is composed of the disulfide-linked alpha and beta chains produced by autocatalytic cleavage of the precursor. N-glycosylated. In terms of processing, proteolytically cleaved into two chains alpha and beta that remain associated via a disulfide bond. Cleavage gives rise to a conformation change that activates the enzyme. The same catalytic Cys residue mediates the autoproteolytic cleavage and subsequent hydrolysis of lipid substrates. The beta chain may undergo an additional C-terminal processing.

Its subcellular location is the lysosome. The protein localises to the secreted. It catalyses the reaction an N-acylsphing-4-enine + H2O = sphing-4-enine + a fatty acid. The catalysed reaction is N-dodecanoylsphing-4-enine + H2O = dodecanoate + sphing-4-enine. It carries out the reaction N-tetradecanoylsphing-4-enine + H2O = tetradecanoate + sphing-4-enine. The enzyme catalyses N-hexadecanoylsphing-4-enine + H2O = sphing-4-enine + hexadecanoate. It catalyses the reaction N-octadecanoylsphing-4-enine + H2O = sphing-4-enine + octadecanoate. The catalysed reaction is N-dodecanoyl-(4R)-hydroxysphinganine + H2O = (4R)-hydroxysphinganine + dodecanoate. It carries out the reaction N-(dodecanoyl)-sphinganine + H2O = dodecanoate + sphinganine. The enzyme catalyses N-(acetyl)-sphing-4-enine + H2O = sphing-4-enine + acetate. It catalyses the reaction N-(hexanoyl)sphing-4-enine + H2O = hexanoate + sphing-4-enine. The catalysed reaction is N-octanoylsphing-4-enine + H2O = octanoate + sphing-4-enine. It carries out the reaction N-(9Z-octadecenoyl)-sphing-4-enine + H2O = sphing-4-enine + (9Z)-octadecenoate. The enzyme catalyses N-dodecanoylethanolamine + H2O = dodecanoate + ethanolamine. The protein operates within lipid metabolism; sphingolipid metabolism. Functionally, lysosomal ceramidase that hydrolyzes sphingolipid ceramides into sphingosine and free fatty acids at acidic pH. Ceramides, sphingosine, and its phosphorylated form sphingosine-1-phosphate are bioactive lipids that mediate cellular signaling pathways regulating several biological processes including cell proliferation, apoptosis and differentiation. Has a higher catalytic efficiency towards C12-ceramides versus other ceramides. Also catalyzes the reverse reaction allowing the synthesis of ceramides from fatty acids and sphingosine. For the reverse synthetic reaction, the natural sphingosine D-erythro isomer is more efficiently utilized as a substrate compared to D-erythro-dihydrosphingosine and D-erythro-phytosphingosine, while the fatty acids with chain lengths of 12 or 14 carbons are the most efficiently used. Also has an N-acylethanolamine hydrolase activity. By regulating the levels of ceramides, sphingosine and sphingosine-1-phosphate in the epidermis, mediates the calcium-induced differentiation of epidermal keratinocytes. Also indirectly regulates tumor necrosis factor/TNF-induced apoptosis. By regulating the intracellular balance between ceramides and sphingosine, in adrenocortical cells, probably also acts as a regulator of steroidogenesis. The polypeptide is Acid ceramidase (Macaca fascicularis (Crab-eating macaque)).